The sequence spans 79 residues: MKRLLIMIVRFYQKYISPLKPPTCRFEPTCSNYFIQALEKHGLLKGLFLGLRRVVRCNPLSKGGYDPVPEEFSFKLRRR.

This sequence belongs to the UPF0161 family.

The protein resides in the cell inner membrane. Its function is as follows. Could be involved in insertion of integral membrane proteins into the membrane. The sequence is that of Putative membrane protein insertion efficiency factor from Thermotoga neapolitana (strain ATCC 49049 / DSM 4359 / NBRC 107923 / NS-E).